A 1438-amino-acid polypeptide reads, in one-letter code: MAMTNREKFKVLADQIKISNQLEQDILEQGELTRIDVSNKNRTWTFQISLPHFLSHEDYLLFTHAIEEEFKEIATVAIDFSIKDTNNQDEFALKYFGHCIDQTRLSPKVKGQLKQKKLIMSGNVLKVLVSNDIERNHFDKACNGSLVKAFRQCGFEIDKVVFETDSTNHDDDLASLEAHIQQEDEQSAREATEKLEKMKAEKAKQQDNNESTVEKCQIGKPIQIENIKPIESIIEEEFKVAIEGVIFDINLKELKSGRHIVELKVTDYTDSLVLKMFTRKNKDDLDHFKALSVGKWVRAQGRIEEDTFVRDLVMMMSDIEEIKKTPKQDKAEDKRVEFHLHTSMSQMDGIPNISAYVEQAAKWGHQALAVTDHNVVQAFPDAHNAAEKHGIKMIYGMEGMLVDDGVPIAYKPTDRNLKDATYVVFDVETTGLSNQYDKIIELAAVKVHNGEIIDKFERFSNPHERLSETIINLTHITDDMLTDAPEIEEVLTEFKEWVGDAIFVAHNASFDMGFIDTGYERLGFGPSTNGVIDTLELSRTINTEYGKHGLNFLAKKYGVELTQHHRAIYDTEATAYIFIKMVQQMKELGVNNHLEINKKLTNEDAYKRARPSHVTLIVQNQEGLKNLFKIVSASLVKYYYRTPRIPRSLLNEYREGILIGTACDEGELFTAVMQKDQSEVEKIAKFYDFIEVQPPALYQDLMDRELIRDNETLTQIYKRLIDAGKSANIPVIATGNAHYLYEHDAIARKILIASQPGNPLNRSTLPEAHFRTTDEMLDDFHFLGEEKAYEIVVTNTNELANKIEKVVPIKDKLFTPRMDGANEEIRELSYSNAKKLYGEDLPQIVIDRLEKELDSIIGNGFSVIYLISQRLVKKSLDDGYLVGSRGSVGSSFVATMTEITEVNPLPPHYICSHCKTSEFFDDGSVGSGFDLPDKKCPTCGNELIKEGQDIPFETFLGFKGDKVPDIDLNFSGEYQPNAHNYTKVLFGEDKVFRAGTIGTVAEKTAFGFVKGYLNDQGIHKRGAEIDRLVKGCTGVKRTTGQHPGGIIVVPDYMDIYDFTPIQFPADDQSAAWMTTHFDFHSIHDNVLKLDILGHDDPTMIRMLQDLSGIDPKTIPVDDKETMQIFSGPESLGVTEDEILCKTGTFGVPEFGTGFVRQMLEDTKPTTFSELVQISGLSHGTDVWLGNAQELIRQGICDLSSVIGCRDDIMVYLMYAGLEPSMAFKTMEFVRKGRGLTDEMVEAMKENNVPDWYLDSCRKIKYMFPKAHAAAYVLMAVRIAYFKVHHPLYYYAAYFTIRASDFDLITMIKDKTSIRNTVKDMYSRYMDLGKKEKDVLTVLEIMNEMAHRGFRLQPISLEKSQAFDFIIEGDTLIPPFISVPGLGENVAQRIVEAREEGPFLSKEDLNKKAGLSQKVIDYLDELGSLPDLPDKAQLSIFDM.

The Exonuclease domain maps to 422-578; sequence YVVFDVETTG…YDTEATAYIF (157 aa).

It belongs to the DNA polymerase type-C family. PolC subfamily.

The protein localises to the cytoplasm. The enzyme catalyses DNA(n) + a 2'-deoxyribonucleoside 5'-triphosphate = DNA(n+1) + diphosphate. Its function is as follows. Required for replicative DNA synthesis. This DNA polymerase also exhibits 3' to 5' exonuclease activity. This Staphylococcus epidermidis (strain ATCC 35984 / DSM 28319 / BCRC 17069 / CCUG 31568 / BM 3577 / RP62A) protein is DNA polymerase III PolC-type.